A 142-amino-acid polypeptide reads, in one-letter code: Deoxyuridine 5'-triphosphate nucleotidohydrolase (142 aa).

Substrate is bound by residues 62–64, asparagine 75, and 79–81; these read RSG and TID.

It belongs to the dUTPase family. Mg(2+) serves as cofactor.

The catalysed reaction is dUTP + H2O = dUMP + diphosphate + H(+). The protein operates within pyrimidine metabolism; dUMP biosynthesis; dUMP from dCTP (dUTP route): step 2/2. This enzyme is involved in nucleotide metabolism: it produces dUMP, the immediate precursor of thymidine nucleotides and it decreases the intracellular concentration of dUTP so that uracil cannot be incorporated into DNA. The sequence is that of Deoxyuridine 5'-triphosphate nucleotidohydrolase from Clostridium novyi (strain NT).